The chain runs to 274 residues: MAIHLYKTSTPSTRNRAVDSQVKSNPRNRLIYGLHCCSKGRNARGIITAGHRGGGHKRLYRKIDFRRNEKNIYGKIVTIEYDPNRNAYICLIHYGDGEKRYILHPRGAIIGDTIVSGTEVPIKMGNALPLTDMPLGTAIHNIEITFGKGGKLARAAGAVAKLIAKEGKSATLKLPSGEVRLISKNCSATVGQVGNVGVNQKSLGRAGSKCWLGKRPVVRGVVMNPVDHPHGGGEGRAPIGRKKPVTPWGYPALGRRSRKRKKYSDNLILRRRTK.

The interval 225 to 274 (PVDHPHGGGEGRAPIGRKKPVTPWGYPALGRRSRKRKKYSDNLILRRRTK) is disordered.

This sequence belongs to the universal ribosomal protein uL2 family. In terms of assembly, part of the 50S ribosomal subunit.

The protein resides in the plastid. It localises to the chloroplast. The chain is Large ribosomal subunit protein uL2cz/uL2cy (rpl2-A) from Lotus japonicus (Lotus corniculatus var. japonicus).